A 115-amino-acid polypeptide reads, in one-letter code: Large ribosomal subunit protein mL60 (115 aa).

Residues 1-23 constitute a mitochondrion transit peptide; that stretch reads MLGAFNSTLARFGGLVHKVPWRL. Positions 88–115 are disordered; the sequence is AGLQGFRKGVHKSPKWTRSTNRVNPTGF. Polar residues predominate over residues 103-115; that stretch reads WTRSTNRVNPTGF.

Belongs to the mitochondrion-specific ribosomal protein mL60 family. As to quaternary structure, component of the mitochondrial large ribosomal subunit (mt-LSU). Mature yeast 74S mitochondrial ribosomes consist of a small (37S) and a large (54S) subunit. The 37S small subunit contains a 15S ribosomal RNA (15S mt-rRNA) and at least 32 different proteins. The 54S large subunit contains a 21S rRNA (21S mt-rRNA) and at least 45 different proteins.

The protein localises to the mitochondrion. Its function is as follows. Component of the mitochondrial ribosome (mitoribosome), a dedicated translation machinery responsible for the synthesis of mitochondrial genome-encoded proteins, including at least some of the essential transmembrane subunits of the mitochondrial respiratory chain. The mitoribosomes are attached to the mitochondrial inner membrane and translation products are cotranslationally integrated into the membrane. The chain is Large ribosomal subunit protein mL60 (mrpl31) from Schizosaccharomyces pombe (strain 972 / ATCC 24843) (Fission yeast).